We begin with the raw amino-acid sequence, 193 residues long: MFIAIEGIDGAGKTTLARGIGNMLLGEGYRVYMTKEPTDGMENYAGDGVELFLKFTINRYAHQREIDRHIKNGEIVICDRYIRSSYAYQFEGIAEFFGNSEKAWEWMDSVSEIIKIRPDVQIYVDVDEETAMERISRRGLRNPHFENEQKLRSVRQIYKGFQWDLIVDGGRDKEAIISETFEKIIARLRQEKT.

Glycine 7 to threonine 14 serves as a coordination point for ATP.

It belongs to the thymidylate kinase family.

It carries out the reaction dTMP + ATP = dTDP + ADP. The protein is Probable thymidylate kinase (tmk) of Thermoplasma acidophilum (strain ATCC 25905 / DSM 1728 / JCM 9062 / NBRC 15155 / AMRC-C165).